The following is a 283-amino-acid chain: uncharacterized protein (283 aa).

Solcar repeat units follow at residues 14-95 (QPVW…LKHL), 102-185 (NDHA…SEAV), and 190-274 (GLAL…TLQG). Transmembrane regions (helical) follow at residues 20 to 40 (TLAG…FDVI), 70 to 90 (GNVV…VAFS), 105 to 125 (AVNF…SYPL), 157 to 177 (FFPG…CFFM), 184 to 204 (AVLS…IAGA), and 249 to 266 (GLSV…ITML).

Belongs to the mitochondrial carrier (TC 2.A.29) family.

The protein localises to the mitochondrion inner membrane. This is an uncharacterized protein from Schizosaccharomyces pombe (strain 972 / ATCC 24843) (Fission yeast).